Here is a 262-residue protein sequence, read N- to C-terminus: Glutamine-binding protein (262 aa).

A signal peptide spans 1 to 26 (MKRKTVWKIWITLALIALLSITALAG). Cysteine 27 carries N-palmitoyl cysteine lipidation. Cysteine 27 is lipidated: S-diacylglycerol cysteine.

It belongs to the bacterial solute-binding protein 3 family.

It is found in the cell membrane. Its function is as follows. Involved in glutamine-transport system. Interacts with the glutamine-transport system GlnPQ. The sequence is that of Glutamine-binding protein (glnH) from Geobacillus stearothermophilus (Bacillus stearothermophilus).